The sequence spans 248 residues: 7-cyano-7-deazaguanine synthase (248 aa).

ATP is bound at residue leucine 22–leucine 32. Zn(2+) contacts are provided by cysteine 216, cysteine 225, cysteine 228, and cysteine 231.

Belongs to the QueC family. Requires Zn(2+) as cofactor.

The enzyme catalyses 7-carboxy-7-deazaguanine + NH4(+) + ATP = 7-cyano-7-deazaguanine + ADP + phosphate + H2O + H(+). It functions in the pathway purine metabolism; 7-cyano-7-deazaguanine biosynthesis. Functionally, catalyzes the ATP-dependent conversion of 7-carboxy-7-deazaguanine (CDG) to 7-cyano-7-deazaguanine (preQ(0)). This chain is 7-cyano-7-deazaguanine synthase, found in Leptospira biflexa serovar Patoc (strain Patoc 1 / Ames).